Consider the following 176-residue polypeptide: MDSEFFQPVYPRHYGECLSSTPAPSFFSTHMYTILIAIVVLIIIIIVLIYLFSSRKKKAAAAIEEEDIQFINPYQDQQWAGVTPQPGIAKPAGASTGSAGKPVMGRPVTNKPVTNKPVTDRLGMAAGGPAAASAPAHPAELYTTATTQNTASQTMPADENLRQRNTYTHKDLENSL.

The chain crosses the membrane as a helical span at residues 32-52; it reads YTILIAIVVLIIIIIVLIYLF. Positions 82–176 are disordered; the sequence is VTPQPGIAKP…YTHKDLENSL (95 aa). Residues 123-154 are compositionally biased toward low complexity; that stretch reads GMAAGGPAAASAPAHPAELYTTATTQNTASQT. Residues 142–154 are interaction with host DYNLL1; that stretch reads YTTATTQNTASQT.

This sequence belongs to the asfivirus envelope protein p54 family. In terms of assembly, interacts with the host light chain cytoplasmic dynein DYNLL1; this interaction is critical for intracellular microtubule-dependent virus transport toward viral factories.

It localises to the virion membrane. The protein localises to the host cytoplasm. The protein resides in the host cytoskeleton. Its subcellular location is the host endoplasmic reticulum membrane. In terms of biological role, inner envelope protein involved, through its interaction with host dynein, in the intracellular microtubule-dependent transport of viral capsid toward viral factories. Seems to induce caspase-3 activation and apoptosis. Plays a role in virion morphogenesis by recruiting and transforming the host ER membranes into the precursors of the viral envelope. Involved in virus attachment to the host cell. This African swine fever virus (isolate Tick/Malawi/Lil 20-1/1983) (ASFV) protein is Inner membrane protein p54.